The following is a 687-amino-acid chain: Mu-like prophage FluMu transposase A (687 aa).

Residues 8–74 enclose the HTH Mu-type domain; the sequence is THYSVYELAN…ELLLKTTPEQ (67 aa). A DNA-binding region (H-T-H motif) is located at residues 398 to 417; that stretch reads PIERAFSHGGLGDYVDKHLL.

In terms of biological role, this transposase is essential for integration, replication-transposition, and excision of Mu-like viral DNA. The chain is Mu-like prophage FluMu transposase A from Haemophilus influenzae (strain ATCC 51907 / DSM 11121 / KW20 / Rd).